Consider the following 75-residue polypeptide: uncharacterized protein (75 aa).

Positions 1–21 (MRLIVVSIMVTLLSGCGSIIS) are cleaved as a signal peptide.

To E.coli YidQ.

This is an uncharacterized protein from Escherichia coli O157:H7.